Consider the following 318-residue polypeptide: MFYQLLHSVLSLVGILSNAFMMYLALKKSPKIMRSYSVVITIKTGTDILASSMSFFVMQRIITDGSSIVVNPTGPCTSFGKSACYAGHMFMLCFLEYDLVWLITSYLFRYTILRGRELCIKKLVRIAFYVFIPSMVHMGVWISIYILTESESVLKGFGIETDDMILSGEIIYWSSITLLTQLFITACLAVVAYTFIRKSLSKFARKMSVIKTNEKNLRNRLVKVATFKLILPSFIFLGITVFVAMFTRLLDYQYGQYIVSVCFMFSPVCSPYAYIIFVPHYRKFIFGRKENVPKLEQGQCETPESPRNTPNLPYIYYI.

Transmembrane regions (helical) follow at residues 5-25 (LLHS…MYLA), 38-58 (VVIT…FFVM), 88-108 (HMFM…SYLF), 126-146 (IAFY…SIYI), 176-196 (ITLL…YTFI), 226-246 (TFKL…VAMF), and 258-278 (IVSV…IIFV).

It belongs to the nematode receptor-like protein srd family.

The protein resides in the membrane. The polypeptide is Serpentine receptor class delta-25 (srd-25) (Caenorhabditis elegans).